The sequence spans 201 residues: Dephospho-CoA kinase (201 aa).

The 192-residue stretch at Leu-10–Arg-201 folds into the DPCK domain. Residue Ala-18–Thr-23 participates in ATP binding.

It belongs to the CoaE family.

The protein resides in the cytoplasm. The catalysed reaction is 3'-dephospho-CoA + ATP = ADP + CoA + H(+). Its pathway is cofactor biosynthesis; coenzyme A biosynthesis; CoA from (R)-pantothenate: step 5/5. Its function is as follows. Catalyzes the phosphorylation of the 3'-hydroxyl group of dephosphocoenzyme A to form coenzyme A. This chain is Dephospho-CoA kinase, found in Synechocystis sp. (strain ATCC 27184 / PCC 6803 / Kazusa).